The following is a 465-amino-acid chain: WAS protein family homolog 2 (465 aa).

Residues 1–54 form a required for WASH complex assembly region; it reads MTPVRMQHSLAGQTYAVPLIQPDLRREEAVQQMADALQYLQKVSGDIFSRISQQ. The WHD1 stretch occupies residues 1-167; that stretch reads MTPVRMQHSL…EGLGGLPSNI (167 aa). Residue lysine 220 forms a Glycyl lysine isopeptide (Lys-Gly) (interchain with G-Cter in ubiquitin) linkage. 2 disordered regions span residues 297–407 and 422–465; these read QDGV…QGGH and GISG…DWES. Pro residues predominate over residues 302–314; it reads TPPPPPPPPPPAP. Residues 349–465 form a VCA region; sequence QGAPREVVDP…AEEDEDDWES (117 aa). One can recognise a WH2 domain in the interval 361–383; that stretch reads GRATLLESIRQAGGIGKAKLRSM. A compositionally biased stretch (basic and acidic residues) spans 382–398; the sequence is SMKERKLEKKKQKEQEQ. Residues 424-436 are compositionally biased toward gly residues; sequence SGKGPGAGEGPGG. Positions 456–465 are enriched in acidic residues; the sequence is AEEDEDDWES.

This sequence belongs to the WASH1 family. Component of the WASH core complex also described as WASH regulatory complex (SHRC) composed of WASH (WASHC1, WASH2P or WASH3P), WASHC2 (WASHC2A or WASHC2C), WASHC3, WASHC4 and WASHC5. The WASH core complex associates with the F-actin-capping protein dimer (formed by CAPZA1, CAPZA2 or CAPZA3 and CAPZB) in a transient or substoichiometric manner which was initially described as WASH complex. Interacts (via WHD1 region) with WASHC2C; the interaction is direct. Interacts with alpha-tubulin. Interacts with BECN1; WASHC1 and AMBRA1 can competitively interact with BECN1. Interacts with BLOC1S2; may associate with the BLOC-1 complex. Interacts with tubulin gamma chain (TUBG1 or TUBG2). Interacts with EXOC1, EXOC4, EXOC8; in MMP14-positive endosomes in breast tumor cells; indicative for an association with the exocyst complex.

The protein localises to the early endosome membrane. Its subcellular location is the recycling endosome membrane. The protein resides in the late endosome. It is found in the cytoplasmic vesicle. It localises to the autophagosome. The protein localises to the cytoplasm. Its subcellular location is the cytoskeleton. The protein resides in the microtubule organizing center. It is found in the centrosome. It localises to the centriole. Acts as a nucleation-promoting factor at the surface of endosomes, where it recruits and activates the Arp2/3 complex to induce actin polymerization, playing a key role in the fission of tubules that serve as transport intermediates during endosome sorting. Involved in endocytic trafficking of EGF. Involved in transferrin receptor recycling. Regulates the trafficking of endosomal alpha5beta1 integrin to the plasma membrane and involved in invasive cell migration. In T-cells involved in endosome-to-membrane recycling of receptors including T-cell receptor (TCR), CD28 and ITGAL; proposed to be implicated in T-cell proliferation and effector function. In dendritic cells involved in endosome-to-membrane recycling of major histocompatibility complex (MHC) class II probably involving retromer and subsequently allowing antigen sampling, loading and presentation during T-cell activation. Involved in Arp2/3 complex-dependent actin assembly driving Salmonella typhimurium invasion independent of ruffling. Involved in the exocytosis of MMP14 leading to matrix remodeling during invasive migration and implicating late endosome-to-plasma membrane tubular connections and cooperation with the exocyst complex. Involved in negative regulation of autophagy independently from its role in endosomal sorting by inhibiting BECN1 ubiquitination to inactivate PIK3C3/Vps34 activity. The chain is WAS protein family homolog 2 (WASH2P) from Homo sapiens (Human).